We begin with the raw amino-acid sequence, 576 residues long: Quinone-reactive Ni/Fe-hydrogenase large chain (576 aa).

Ni(2+)-binding residues include Cys62, Cys65, Cys547, and Cys550.

The protein belongs to the [NiFe]/[NiFeSe] hydrogenase large subunit family. As to quaternary structure, heterodimer of a large and a small subunit. Ni(2+) serves as cofactor.

The protein localises to the cell membrane. It catalyses the reaction H2 + a menaquinone = a menaquinol. This enzyme recycles the H(2) produced by nitrogenase to increase the production of ATP and to protect nitrogenase against inhibition or damage by O(2) under carbon- or phosphate-limited conditions. The polypeptide is Quinone-reactive Ni/Fe-hydrogenase large chain (hydB) (Wolinella succinogenes (strain ATCC 29543 / DSM 1740 / CCUG 13145 / JCM 31913 / LMG 7466 / NCTC 11488 / FDC 602W) (Vibrio succinogenes)).